We begin with the raw amino-acid sequence, 346 residues long: Selenide, water dikinase (346 aa).

Sec16 is a catalytic residue. Position 16 (Sec16) is a non-standard amino acid, selenocysteine. Residues Lys19 and 47–49 (TAD) contribute to the ATP site. Position 50 (Asp50) interacts with Mg(2+). ATP-binding positions include Asp67, Asp90, and 138–140 (GHS). Asp90 provides a ligand contact to Mg(2+). Asp226 contributes to the Mg(2+) binding site.

This sequence belongs to the selenophosphate synthase 1 family. Class I subfamily. As to quaternary structure, homodimer. Mg(2+) serves as cofactor.

The catalysed reaction is hydrogenselenide + ATP + H2O = selenophosphate + AMP + phosphate + 2 H(+). Its function is as follows. Synthesizes selenophosphate from selenide and ATP. This chain is Selenide, water dikinase, found in Haemophilus influenzae (strain ATCC 51907 / DSM 11121 / KW20 / Rd).